A 511-amino-acid chain; its full sequence is cAMP-regulated M3L protein (511 aa).

To D.discoideum protein M3R.

The chain is cAMP-regulated M3L protein (prtA) from Dictyostelium discoideum (Social amoeba).